The following is a 168-amino-acid chain: Nicotinamide-nucleotide adenylyltransferase (168 aa).

10 residues coordinate ATP: Arg8, Phe9, His13, His16, Phe119, Arg121, Tyr124, Gly126, Thr127, and Arg130.

This sequence belongs to the archaeal NMN adenylyltransferase family. As to quaternary structure, homohexamer existing as a trimer of dimers.

It localises to the cytoplasm. It catalyses the reaction beta-nicotinamide D-ribonucleotide + ATP + H(+) = diphosphate + NAD(+). Its pathway is cofactor biosynthesis; NAD(+) biosynthesis; NAD(+) from nicotinamide D-ribonucleotide: step 1/1. Catalyzes the formation of NAD(+) from nicotinamide mononucleotide (NMN) and ATP. The protein is Nicotinamide-nucleotide adenylyltransferase of Methanocaldococcus jannaschii (strain ATCC 43067 / DSM 2661 / JAL-1 / JCM 10045 / NBRC 100440) (Methanococcus jannaschii).